Consider the following 145-residue polypeptide: Protein ImpA (145 aa).

Residues serine 64 and lysine 101 each act as for autocatalytic cleavage activity in the active site.

The protein belongs to the peptidase S24 family.

Involved in UV protection and mutation. The protein is Protein ImpA of Escherichia coli.